The sequence spans 363 residues: Pulmonary surfactant-associated protein B (363 aa).

The first 16 residues, 1 to 16 (LLWLLLLPTLCGLGAA), serve as a signal peptide directing secretion. A propeptide spanning residues 17–180 (DWSAPSLACA…PHTQDLSEQQ (164 aa)) is cleaved from the precursor. Residues 18 to 58 (WSAPSLACARGPAFWCQSLEQALQCRALGHCLQEVWGNARA) form the Saposin A-type domain. 3 consecutive Saposin B-type domains span residues 58–140 (ADDL…KPGL), 184–261 (PLPY…SHED), and 277–352 (QESK…RTTF). 9 cysteine pairs are disulfide-bonded: Cys-62–Cys-136, Cys-65–Cys-130, Cys-93–Cys-105, Cys-188–Cys-257, Cys-191–Cys-251, Cys-215–Cys-226, Cys-281–Cys-348, Cys-284–Cys-342, and Cys-307–Cys-317. Residues 260 to 363 (EDSAGPALAS…PLQCIHIPHF (104 aa)) constitute a propeptide that is removed on maturation. Residue Asn-293 is glycosylated (N-linked (GlcNAc...) asparagine).

As to quaternary structure, homodimer; disulfide-linked.

Its subcellular location is the secreted. The protein localises to the extracellular space. It localises to the surface film. Pulmonary surfactant-associated proteins promote alveolar stability by lowering the surface tension at the air-liquid interface in the peripheral air spaces. SP-B increases the collapse pressure of palmitic acid to nearly 70 millinewtons per meter. The polypeptide is Pulmonary surfactant-associated protein B (SFTPB) (Canis lupus familiaris (Dog)).